A 132-amino-acid chain; its full sequence is Ribosome-binding factor A (132 aa).

This sequence belongs to the RbfA family. As to quaternary structure, monomer. Binds 30S ribosomal subunits, but not 50S ribosomal subunits or 70S ribosomes.

Its subcellular location is the cytoplasm. In terms of biological role, one of several proteins that assist in the late maturation steps of the functional core of the 30S ribosomal subunit. Associates with free 30S ribosomal subunits (but not with 30S subunits that are part of 70S ribosomes or polysomes). Required for efficient processing of 16S rRNA. May interact with the 5'-terminal helix region of 16S rRNA. The polypeptide is Ribosome-binding factor A (Pseudomonas putida (strain ATCC 700007 / DSM 6899 / JCM 31910 / BCRC 17059 / LMG 24140 / F1)).